The chain runs to 528 residues: MGDAPSPEEKLHLITRNLQEVLGEEKLKEILKERELKVYWGTATTGKPHVAYFVPMSKIADFLKAGCEVTILFADLHAYLDNMKAPWELLELRTSYYENVIKAMLESIGVPLEKLKFIKGTDYQLSKEYTLDVYRLSSVVTQHDAKKAGAEVVKQVEHPLLSGLLYPGLQALDEEYLKVDAQFGGVDQRKIFTFAEKYLPALGYSKRVHLMNPMVPGLTGSKMSSSEEESKIDLLDRKEDVKKKLKKAFCEPGNVENNGVLSFIKHVLFPLKSEFVILRDEKWGGNKTYTVYLELEKDFAAEVVHPGDLKNSVEVALNKLLDPIREKFNTPALKKLASAAYPDPSKQKPPAKGPAKNSEPEEVIPSRLDIRVGKILSVEKHPDADSLYVEKIDVGEAEPRTVVSGLVQFVPKEELQDRLVVVLCNLKPQKMRGVDSQGMLLCASVEGVSRQVEPLDPPAGSAPGERVFVQGYEKGQPDEELKPKKKVFEKLQADFKISEECIAQWKQTNFMTKLGFVSCKSLKGGNIS.

M1 bears the N-acetylmethionine mark. G2 is subject to N-acetylglycine; in Tyrosine--tRNA ligase, cytoplasmic, N-terminally processed. Y39 lines the L-tyrosine pocket. Residue Y39 participates in trans-resveratrol binding. Positions 44–52 match the 'HIGH' region motif; the sequence is TTGKPHVAY. L-tyrosine contacts are provided by Y166, Q170, D173, and Q188. Trans-resveratrol is bound by residues Q170 and D173. Position 197 is an N6-acetyllysine (K197). At S205 the chain carries Phosphoserine. N6-acetyllysine is present on K206. Positions 222 to 226 match the 'KMSKS' region motif; sequence KMSSS. Positions 242-247 match the Nuclear localization signal motif; that stretch reads KKKLKK. The tract at residues 339–363 is disordered; that stretch reads AAYPDPSKQKPPAKGPAKNSEPEEV. Residues 364–468 form the tRNA-binding domain; that stretch reads IPSRLDIRVG…AGSAPGERVF (105 aa). A Phosphoserine modification is found at S386. 3 positions are modified to N6-acetyllysine: K474, K482, and K490.

The protein belongs to the class-I aminoacyl-tRNA synthetase family. In terms of assembly, homodimer. Interacts (when binding to resveratrol) with PARP1; interaction stimulates the poly-ADP-ribosyltransferase activity of PARP1.

Its subcellular location is the cytoplasm. The protein localises to the nucleus. The enzyme catalyses tRNA(Tyr) + L-tyrosine + ATP = L-tyrosyl-tRNA(Tyr) + AMP + diphosphate + H(+). Its activity is regulated as follows. Resveratrol strongly inhibits the tyrosine--tRNA ligase activity. In terms of biological role, tyrosine--tRNA ligase that catalyzes the attachment of tyrosine to tRNA(Tyr) in a two-step reaction: tyrosine is first activated by ATP to form Tyr-AMP and then transferred to the acceptor end of tRNA(Tyr). Also acts as a positive regulator of poly-ADP-ribosylation in the nucleus, independently of its tyrosine--tRNA ligase activity. Activity is switched upon resveratrol-binding: resveratrol strongly inhibits the tyrosine--tRNA ligase activity and promotes relocalization to the nucleus, where YARS1 specifically stimulates the poly-ADP-ribosyltransferase activity of PARP1. The polypeptide is Tyrosine--tRNA ligase, cytoplasmic (Yars1) (Mus musculus (Mouse)).